Consider the following 1025-residue polypeptide: Kinesin-like protein KIN-14P (1025 aa).

Disordered regions lie at residues Met-1 to Gly-87 and Tyr-263 to Glu-286. Over residues Ser-15–Ser-28 the composition is skewed to low complexity. A compositionally biased stretch (basic and acidic residues) spans Val-29–Thr-41. Positions Pro-42 to Ser-53 are enriched in low complexity. Residues Lys-65–Gln-75 are compositionally biased toward polar residues. Positions His-203–Asn-425 form a coiled coil. Basic and acidic residues predominate over residues Thr-270–Glu-286. The Kinesin motor domain maps to Asn-509–Val-838. Gly-593–Thr-600 is a binding site for ATP. Residues Lys-847–Gln-879 are a coiled coil. Disordered stretches follow at residues Gln-881–Ala-926, Ala-939–Asp-977, and Thr-994–Ala-1025. Composition is skewed to polar residues over residues Ser-901–Ser-913 and Ala-939–Ile-948. The span at Val-950–Lys-962 shows a compositional bias: basic and acidic residues. Composition is skewed to low complexity over residues Ser-963–Arg-974 and Ser-998–Ser-1016.

It belongs to the TRAFAC class myosin-kinesin ATPase superfamily. Kinesin family. KIN-14 subfamily.

The sequence is that of Kinesin-like protein KIN-14P from Arabidopsis thaliana (Mouse-ear cress).